Reading from the N-terminus, the 174-residue chain is MGILNLWRQFGRRYFWSHLLLGVVAASIGAPTILAGVTDNISQANTSPSQSWQNQALSAFDNLFSLQNVQHQPANGVNYWQQHAVRNVIRQLSFAFSISQPMSDETAKQSIRLSSSNIQQLVLETLNTLLIREPKPPEPVLDIPFLNVASQSSYILTLWIAKAQGIRAGPTAYL.

The first 35 residues, 1-35, serve as a signal peptide directing secretion; sequence MGILNLWRQFGRRYFWSHLLLGVVAASIGAPTILA.

This sequence belongs to the SecM family.

It localises to the cytoplasm. The protein localises to the cytosol. It is found in the periplasm. Regulates secA expression by translational coupling of the secM secA operon. Translational pausing at a specific Pro residue 5 residues before the end of the protein may allow disruption of a mRNA repressor helix that normally suppresses secA translation initiation. The protein is Secretion monitor of Photorhabdus laumondii subsp. laumondii (strain DSM 15139 / CIP 105565 / TT01) (Photorhabdus luminescens subsp. laumondii).